The following is a 241-amino-acid chain: 1-(5-phosphoribosyl)-5-[(5-phosphoribosylamino)methylideneamino] imidazole-4-carboxamide isomerase (241 aa).

Residue Asp10 is the Proton acceptor of the active site. The active-site Proton donor is Asp129.

This sequence belongs to the HisA/HisF family.

It is found in the cytoplasm. The catalysed reaction is 1-(5-phospho-beta-D-ribosyl)-5-[(5-phospho-beta-D-ribosylamino)methylideneamino]imidazole-4-carboxamide = 5-[(5-phospho-1-deoxy-D-ribulos-1-ylimino)methylamino]-1-(5-phospho-beta-D-ribosyl)imidazole-4-carboxamide. Its pathway is amino-acid biosynthesis; L-histidine biosynthesis; L-histidine from 5-phospho-alpha-D-ribose 1-diphosphate: step 4/9. The protein is 1-(5-phosphoribosyl)-5-[(5-phosphoribosylamino)methylideneamino] imidazole-4-carboxamide isomerase of Salinispora arenicola (strain CNS-205).